A 134-amino-acid polypeptide reads, in one-letter code: Small ribosomal subunit protein uS11 (134 aa).

The interval 1–22 (MAQKTRATAARKPRRKVNKNVT) is disordered. Residues 9–18 (AARKPRRKVN) are compositionally biased toward basic residues.

The protein belongs to the universal ribosomal protein uS11 family. As to quaternary structure, part of the 30S ribosomal subunit. Interacts with proteins S7 and S18. Binds to IF-3.

In terms of biological role, located on the platform of the 30S subunit, it bridges several disparate RNA helices of the 16S rRNA. Forms part of the Shine-Dalgarno cleft in the 70S ribosome. The chain is Small ribosomal subunit protein uS11 from Kocuria rhizophila (strain ATCC 9341 / DSM 348 / NBRC 103217 / DC2201).